The sequence spans 262 residues: Sperm microtubule inner protein 6 (262 aa).

The protein belongs to the SPMIP6 family. As to quaternary structure, microtubule inner protein component of sperm flagellar doublet microtubules. Interacts with alpha-tubulin. Expressed in testis. Strongly expressed in ciliated epithelial cells with lower levels in goblet cells (at protein level).

The protein resides in the cytoplasm. The protein localises to the cytoskeleton. It localises to the nucleus. It is found in the mitochondrion. Its subcellular location is the flagellum axoneme. Functionally, may participate in intramanchette transport and midpiece formation of the sperm tail. May play a potential role in somatic cell proliferation. The chain is Sperm microtubule inner protein 6 from Homo sapiens (Human).